Reading from the N-terminus, the 300-residue chain is N-acetylmuramic acid 6-phosphate etherase (300 aa).

The SIS domain maps to 57 to 220; it reads IAVAFQCGGR…TTGAMIRTGK (164 aa). Catalysis depends on glutamate 85, which acts as the Proton donor. The active site involves glutamate 116.

This sequence belongs to the GCKR-like family. MurNAc-6-P etherase subfamily. Homodimer.

The catalysed reaction is N-acetyl-D-muramate 6-phosphate + H2O = N-acetyl-D-glucosamine 6-phosphate + (R)-lactate. The protein operates within amino-sugar metabolism; 1,6-anhydro-N-acetylmuramate degradation. Its pathway is amino-sugar metabolism; N-acetylmuramate degradation. It participates in cell wall biogenesis; peptidoglycan recycling. Its function is as follows. Specifically catalyzes the cleavage of the D-lactyl ether substituent of MurNAc 6-phosphate, producing GlcNAc 6-phosphate and D-lactate. Together with AnmK, is also required for the utilization of anhydro-N-acetylmuramic acid (anhMurNAc) either imported from the medium or derived from its own cell wall murein, and thus plays a role in cell wall recycling. This Aliivibrio salmonicida (strain LFI1238) (Vibrio salmonicida (strain LFI1238)) protein is N-acetylmuramic acid 6-phosphate etherase.